The primary structure comprises 191 residues: Small ribosomal subunit protein uS10c (191 aa).

The transit peptide at 1–56 directs the protein to the chloroplast; it reads MAVSTVSSFLLPSFGIPSSSPSSTRLKVSLLPSSSTHGGLSSCVLTKPSVSLTKVF.

The protein belongs to the universal ribosomal protein uS10 family. As to quaternary structure, part of the 30S ribosomal subunit.

The protein localises to the plastid. Its subcellular location is the chloroplast. The sequence is that of Small ribosomal subunit protein uS10c (RPS10) from Arabidopsis thaliana (Mouse-ear cress).